Reading from the N-terminus, the 139-residue chain is Transcription antitermination protein NusB (139 aa).

This sequence belongs to the NusB family.

In terms of biological role, involved in transcription antitermination. Required for transcription of ribosomal RNA (rRNA) genes. Binds specifically to the boxA antiterminator sequence of the ribosomal RNA (rrn) operons. In Edwardsiella ictaluri (strain 93-146), this protein is Transcription antitermination protein NusB.